We begin with the raw amino-acid sequence, 364 residues long: Chorismate synthase (364 aa).

The disordered stretch occupies residues 41–60 (MQHDLDRRRPGTSRYTTARR). NADP(+)-binding residues include arginine 48 and arginine 54. FMN is bound by residues 125 to 127 (RSS), 238 to 239 (NA), glycine 278, 293 to 297 (KPTSS), and arginine 319.

This sequence belongs to the chorismate synthase family. As to quaternary structure, homotetramer. It depends on FMNH2 as a cofactor.

The catalysed reaction is 5-O-(1-carboxyvinyl)-3-phosphoshikimate = chorismate + phosphate. It functions in the pathway metabolic intermediate biosynthesis; chorismate biosynthesis; chorismate from D-erythrose 4-phosphate and phosphoenolpyruvate: step 7/7. Functionally, catalyzes the anti-1,4-elimination of the C-3 phosphate and the C-6 proR hydrogen from 5-enolpyruvylshikimate-3-phosphate (EPSP) to yield chorismate, which is the branch point compound that serves as the starting substrate for the three terminal pathways of aromatic amino acid biosynthesis. This reaction introduces a second double bond into the aromatic ring system. This Shewanella baltica (strain OS223) protein is Chorismate synthase.